The following is a 585-amino-acid chain: ATP-dependent lipid A-core flippase (585 aa).

Helical transmembrane passes span 24–44, 65–85, 143–163, 165–185, and 253–273; these read LWKV…ASAA, LLVP…SFCG, ITVV…MIYV, WKLT…IGYV, and PIIQ…ALSP. One can recognise an ABC transmembrane type-1 domain in the interval 29 to 310; that stretch reads ALAVLGNVIY…LTEVNAVIQR (282 aa). The ABC transporter domain occupies 342-578; that stretch reads LEFKSLGFAY…DGAYAALHKL (237 aa). Residue 376–383 participates in ATP binding; it reads GRSGSGKS.

This sequence belongs to the ABC transporter superfamily. Lipid exporter (TC 3.A.1.106) family. In terms of assembly, homodimer.

The protein localises to the cell inner membrane. It carries out the reaction ATP + H2O + lipid A-core oligosaccharideSide 1 = ADP + phosphate + lipid A-core oligosaccharideSide 2.. Involved in lipopolysaccharide (LPS) biosynthesis. Translocates lipid A-core from the inner to the outer leaflet of the inner membrane. Transmembrane domains (TMD) form a pore in the inner membrane and the ATP-binding domain (NBD) is responsible for energy generation. The sequence is that of ATP-dependent lipid A-core flippase from Hahella chejuensis (strain KCTC 2396).